Reading from the N-terminus, the 517-residue chain is ATP synthase subunit alpha 1 (517 aa).

174–181 (GDRQTGKT) serves as a coordination point for ATP.

This sequence belongs to the ATPase alpha/beta chains family. In terms of assembly, F-type ATPases have 2 components, CF(1) - the catalytic core - and CF(0) - the membrane proton channel. CF(1) has five subunits: alpha(3), beta(3), gamma(1), delta(1), epsilon(1). CF(0) has three main subunits: a(1), b(2) and c(9-12). The alpha and beta chains form an alternating ring which encloses part of the gamma chain. CF(1) is attached to CF(0) by a central stalk formed by the gamma and epsilon chains, while a peripheral stalk is formed by the delta and b chains.

It localises to the cell inner membrane. The enzyme catalyses ATP + H2O + 4 H(+)(in) = ADP + phosphate + 5 H(+)(out). Its function is as follows. Produces ATP from ADP in the presence of a proton gradient across the membrane. The alpha chain is a regulatory subunit. The protein is ATP synthase subunit alpha 1 of Albidiferax ferrireducens (strain ATCC BAA-621 / DSM 15236 / T118) (Rhodoferax ferrireducens).